The sequence spans 332 residues: Ribosomal RNA small subunit methyltransferase C (332 aa).

The protein belongs to the methyltransferase superfamily. RsmC family. In terms of assembly, monomer.

Its subcellular location is the cytoplasm. The enzyme catalyses guanosine(1207) in 16S rRNA + S-adenosyl-L-methionine = N(2)-methylguanosine(1207) in 16S rRNA + S-adenosyl-L-homocysteine + H(+). Functionally, specifically methylates the guanine in position 1207 of 16S rRNA in the 30S particle. In Pseudomonas putida (strain ATCC 47054 / DSM 6125 / CFBP 8728 / NCIMB 11950 / KT2440), this protein is Ribosomal RNA small subunit methyltransferase C.